Here is a 643-residue protein sequence, read N- to C-terminus: Zinc finger protein 23 (643 aa).

A KRAB domain is found at 1-43 (MLENYGNVASLGFPLLKPAVISQLEGGSELGGSSPLAAGTGLQ). Lysine 157 is covalently cross-linked (Glycyl lysine isopeptide (Lys-Gly) (interchain with G-Cter in SUMO2)). The C2H2-type 1; degenerate zinc finger occupies 168–190 (FKCEELVEPFRCDSQLIQHQENN). C2H2-type zinc fingers lie at residues 196–218 (YQCSECGKAFSINEKLIWHQRLH), 224–246 (FKCVECGKSFSYSSHYITHQTIH), 252–274 (YQCKMCGKAFSVNGSLSRHQRIH), 280–302 (YQCKECGNGFSCSSAYITHQRVH), 308–330 (YECNDCGKAFNVNAKLIQHQRIH), 336–358 (YECNECGKGFRCSSQLRQHQSIH), 364–386 (YQCKECGKGFNNNTKLIQHQRIH), 392–414 (YECTECGKAFSVKGKLIQHQRIH), 420–442 (YECNECGKAFRCNSQFRQHLRIH), 448–470 (YECNECGKAFSVNGKLMRHQRIH), 476–498 (FECNECGRCFTSKRNLLDHHRIH), 504–526 (YQCKECGKAFSINAKLTRHQRIH), 532–554 (FKCMECEKAFSCSSNYIVHQRIH), 560–582 (FQCKECGKAFHVNAHLIRHQRSH), 588–610 (FRCVECGKGFSFSSDYIIHQTVH), and 616–638 (YMCSVCGKAFRFSFQLSQHQSVH).

The protein belongs to the krueppel C2H2-type zinc-finger protein family.

It is found in the nucleus. In terms of biological role, may be involved in transcriptional regulation. May have a role in embryonic development. In Homo sapiens (Human), this protein is Zinc finger protein 23 (ZNF23).